Reading from the N-terminus, the 413-residue chain is MAP kinase-interacting serine/threonine-protein kinase 1 (413 aa).

Residues 1-26 (MGSSEPLPIVDSDKRRKKKRKTRATD) are disordered. A Phosphothreonine; by PAK2 modification is found at threonine 22. Serine 27 is modified (phosphoserine; by PAK2). Residues 37–321 (QLTSELLGEG…AAQVLQHPWV (285 aa)) enclose the Protein kinase domain. Residues 43-51 (LGEGAYAKV) and lysine 66 contribute to the ATP site. Aspartate 158 (proton acceptor) is an active-site residue. Residues serine 168 and serine 173 each carry the phosphoserine modification. A phosphothreonine mark is found at threonine 197, threonine 202, and threonine 332.

It belongs to the protein kinase superfamily. CAMK Ser/Thr protein kinase family. As to quaternary structure, interacts with the C-terminal regions of EIF4G1 and EIF4G2. Also binds to dephosphorylated ERK1 and ERK2, and to the p38 kinases. Mg(2+) is required as a cofactor. Dual phosphorylation of Thr-197 and Thr-202 activates the kinase. Phosphorylation of Thr-332 activates the kinase. MAPK3/ERK1 is one of the kinases which activate MKNK1/MNK1. Phosphorylation by PAK2 leads to a reduced phosphorylation of EIF4G1.

It catalyses the reaction L-seryl-[protein] + ATP = O-phospho-L-seryl-[protein] + ADP + H(+). The enzyme catalyses L-threonyl-[protein] + ATP = O-phospho-L-threonyl-[protein] + ADP + H(+). Phosphorylated and activated by the p38 kinases and kinases in the Erk pathway. In terms of biological role, may play a role in the response to environmental stress and cytokines. Appears to regulate translation by phosphorylating EIF4E, thus increasing the affinity of this protein for the 7-methylguanosine-containing mRNA cap. The sequence is that of MAP kinase-interacting serine/threonine-protein kinase 1 (Mknk1) from Rattus norvegicus (Rat).